The sequence spans 122 residues: Semaphorin-like protein A43 (122 aa).

The region spanning 1 to 122 is the Sema domain; the sequence is MIYLYTADNV…RIMYLFYEYH (122 aa).

Belongs to the semaphorin family.

The polypeptide is Semaphorin-like protein A43 (A43R) (Homo sapiens (Human)).